Consider the following 429-residue polypeptide: MFYDTAKIYVKAGDGGNGCVSFRREKYVPNGGPDGGDGGRGGSVILVGDEGLNTLLDFRYKRHYKAPRGEHGKGSNRHGKAGENLYIRVPVGTVVKDEATGEILADITEHGQEVVVARGGRGGRGNAHFASPTHQAPKFAELGEPGEERWLLLELKLLADVGLVGYPNAGKSTLISRVSAARPKIADYPFTTLTPNLGVVEVGEGQSFVMADIPGLIEGAHAGVGLGHQFLRHVERTRVLLMVLDMSGFEGRDPVDDFEVLLKELKLYNEQLLTKPLVIAANKMDTANAQENLEKLKQHIAGKYEIYPISALTGEGLKPLIYRLWEIISTLPRESLEVKPQKVIKEQPEEGFVVEKVDGIFVVKGKKIERLVAMTNLDNEEAVDRLQRTFTRMGLEEQLKRAGVKPGDLVRIGKFEFYFVDETEGLEEE.

Residues 1–158 form the Obg domain; sequence MFYDTAKIYV…RWLLLELKLL (158 aa). The OBG-type G domain occupies 159–329; the sequence is ADVGLVGYPN…LIYRLWEIIS (171 aa). GTP contacts are provided by residues 165-172, 190-194, 212-215, 282-285, and 310-312; these read GYPNAGKS, FTTLT, DIPG, NKMD, and SAL. Residues S172 and T192 each contribute to the Mg(2+) site. Residues 344–421 enclose the OCT domain; it reads IKEQPEEGFV…IGKFEFYFVD (78 aa).

The protein belongs to the TRAFAC class OBG-HflX-like GTPase superfamily. OBG GTPase family. Monomer. The cofactor is Mg(2+).

It is found in the cytoplasm. An essential GTPase which binds GTP, GDP and possibly (p)ppGpp with moderate affinity, with high nucleotide exchange rates and a fairly low GTP hydrolysis rate. Plays a role in control of the cell cycle, stress response, ribosome biogenesis and in those bacteria that undergo differentiation, in morphogenesis control. In Carboxydothermus hydrogenoformans (strain ATCC BAA-161 / DSM 6008 / Z-2901), this protein is GTPase Obg.